Consider the following 234-residue polypeptide: Thrombin-like enzyme ancrod (234 aa).

In terms of domain architecture, Peptidase S1 spans 1–227; that stretch reads VIGGDECNIN…YRDWVNNVIA (227 aa). 6 disulfides stabilise this stretch: Cys-7–Cys-141, Cys-28–Cys-44, Cys-78–Cys-232, Cys-120–Cys-188, Cys-152–Cys-167, and Cys-178–Cys-203. An N-linked (GlcNAc...) asparagine glycan is attached at Asn-23. Catalysis depends on His-43, which acts as the Charge relay system. Asn-79 carries an N-linked (GlcNAc...) asparagine glycan. Asp-88 (charge relay system) is an active-site residue. Asn-99 and Asn-148 each carry an N-linked (GlcNAc...) asparagine glycan. The Charge relay system role is filled by Ser-182. N-linked (GlcNAc...) asparagine glycosylation is present at Asn-229.

This sequence belongs to the peptidase S1 family. Snake venom subfamily. As to quaternary structure, monomer. As to expression, expressed by the venom gland.

Its subcellular location is the secreted. The catalysed reaction is Selective cleavage of Arg-|-Xaa bond in fibrinogen, to form fibrin, and release fibrinopeptide A. The specificity of further degradation of fibrinogen varies with species origin of the enzyme.. Thrombin-like snake venom serine protease that acts as an anticoagulant. It cleaves fibrinogen (FGA) to split off the A-fibrinopeptides (A, AY and AP), but not the B-fibrinopeptide. The resulting fibrin polymers are imperfectly formed and much smaller in size (1 to 2 um long) than the fibrin polymers produced by the action of thrombin. These ancrod-induced microthrombi are friable, unstable, urea-soluble and have significantly degraded alpha chains. They do not cross-link to form thrombi. They are markedly susceptible to digestion by plasmin and are rapidly removed from circulation by either reticuloendothelial phagocytosis or normal fibrinolysis, or both. Anticoagulation through the removal of fibrinogen from the blood is rapid, occurring within hours following its administration. It does not activate plasminogen and does not degrade preformed, fully cross-linked thrombin fibrin. It also reduces the level of plasminogen activator inhibitor (PAI) and may stimulate the release of tissue plasminogen activator (PLAT) from the endothelium. The profibrinolytic effect of these 2 actions appears to be limited to local microthrombus degradation. The polypeptide is Thrombin-like enzyme ancrod (Calloselasma rhodostoma (Malayan pit viper)).